The chain runs to 579 residues: Zinc finger-containing ubiquitin peptidase 1 (579 aa).

Residues 2-25 (LSCDICGETVSSEPDMKAHLLIVH) form a C2H2-type 1 zinc finger. The segment at 30–53 (VICPFCKLSGVNYDEMCFHIETAH) adopts a C2H2-type 2; atypical zinc-finger fold. 2 consecutive C2H2-type zinc fingers follow at residues 155 to 178 (PECP…KTKH) and 194 to 216 (YDCP…VDLH). Residues 227–249 (NRVQCSRDLELAQQLQQEEDRKR) form an MIU region. The zUBD/ZHA stretch occupies residues 250–275 (RSEESRQEMEEFQKLQRQYGLDNSGG). The residue at position 263 (Lys-263) is an N6-acetyllysine. Cys-361 functions as the Nucleophile in the catalytic mechanism. His-492 functions as the Proton acceptor in the catalytic mechanism. Asp-513 is a catalytic residue.

This sequence belongs to the peptidase C78 family. ZUFSP subfamily. In terms of assembly, interacts with RPA1 and RPA2.

It is found in the cytoplasm. The protein resides in the nucleus. The enzyme catalyses Thiol-dependent hydrolysis of ester, thioester, amide, peptide and isopeptide bonds formed by the C-terminal Gly of ubiquitin (a 76-residue protein attached to proteins as an intracellular targeting signal).. Its function is as follows. Deubiquitinase with endodeubiquitinase activity that specifically interacts with and cleaves 'Lys-63'-linked long polyubiquitin chains. Shows only weak activity against 'Lys-11' and 'Lys-48'-linked chains. Plays an important role in genome stability pathways, functioning to prevent spontaneous DNA damage and also promote cellular survival in response to exogenous DNA damage. Modulates the ubiquitination status of replication protein A (RPA) complex proteins in response to replication stress. The protein is Zinc finger-containing ubiquitin peptidase 1 of Bos taurus (Bovine).